The sequence spans 124 residues: 14 kDa phosphohistidine phosphatase (124 aa).

K20 contributes to the substrate binding site. The Proton acceptor role is filled by H52. A substrate-binding site is contributed by 93–95 (SMG).

Belongs to the janus family. Monomer.

It localises to the cytoplasm. The enzyme catalyses N(pros)-phospho-L-histidyl-[protein] + H2O = L-histidyl-[protein] + phosphate. The catalysed reaction is N(tele)-phospho-L-histidyl-[protein] + H2O = L-histidyl-[protein] + phosphate. Functionally, exhibits phosphohistidine phosphatase activity. The sequence is that of 14 kDa phosphohistidine phosphatase (Phpt1) from Mus musculus (Mouse).